We begin with the raw amino-acid sequence, 1104 residues long: Valine--tRNA ligase, mitochondrial (1104 aa).

A mitochondrion-targeting transit peptide spans 1 to 47; the sequence is MNKWLNTLSKTFTFRLLNCHYRRSLPLCQNFSLKKSLTHNQVRFFKM. S73 carries the phosphoserine modification. The segment at 99-119 is disordered; it reads KKNAAATTGASQKKPKKKKEV. Residues 190–200 carry the 'HIGH' region motif; sequence PNVTGALHIGH. Residues S294 and S332 each carry the phosphoserine modification. The 'KMSKS' region motif lies at 703-707; that stretch reads KMSKS. K706 contributes to the ATP binding site. S707 is subject to Phosphoserine. T1003 carries the post-translational modification Phosphothreonine.

This sequence belongs to the class-I aminoacyl-tRNA synthetase family.

The protein resides in the cytoplasm. The protein localises to the mitochondrion. It carries out the reaction tRNA(Val) + L-valine + ATP = L-valyl-tRNA(Val) + AMP + diphosphate. The protein is Valine--tRNA ligase, mitochondrial (VAS1) of Saccharomyces cerevisiae (strain ATCC 204508 / S288c) (Baker's yeast).